The following is a 390-amino-acid chain: Transcription factor bHLH76 (390 aa).

Residues 147-217 form a disordered region; that stretch reads NVSEDSQSSG…SEKQPSDSLK (71 aa). Positions 207–217 are enriched in basic and acidic residues; sequence NSEKQPSDSLK. Residues 229-279 enclose the bHLH domain; that stretch reads QATNSHSLAERVRREKISERMKFLQDLVPGCDKVTGKAVMLDEIINYVQSL.

As to quaternary structure, homodimer. Interacts with IBH1. Binds reversibly to CRY2 after blue light illumination. Expressed constitutively in roots, leaves, stems, and flowers.

Its subcellular location is the nucleus. Transcriptional activator involved in cell elongation. Regulates the expression of a subset of genes involved in cell expansion by binding to the G-box motif. Binds to chromatin DNA of the FT gene and promotes its expression, and thus triggers flowering in response to blue light. The sequence is that of Transcription factor bHLH76 (BHLH76) from Arabidopsis thaliana (Mouse-ear cress).